Consider the following 31-residue polypeptide: U8-ctenitoxin-Co1a (31 aa).

Disulfide bonds link Cys-4/Cys-18 and Cys-11/Cys-24.

As to expression, expressed by the venom gland.

It localises to the secreted. In terms of biological role, blocks voltage-gated sodium channels (Nav). The sequence is that of U8-ctenitoxin-Co1a from Ctenus ornatus (Brazilian spider).